A 97-amino-acid polypeptide reads, in one-letter code: Co-chaperonin GroES (97 aa).

It belongs to the GroES chaperonin family. In terms of assembly, heptamer of 7 subunits arranged in a ring. Interacts with the chaperonin GroEL.

The protein localises to the cytoplasm. Functionally, together with the chaperonin GroEL, plays an essential role in assisting protein folding. The GroEL-GroES system forms a nano-cage that allows encapsulation of the non-native substrate proteins and provides a physical environment optimized to promote and accelerate protein folding. GroES binds to the apical surface of the GroEL ring, thereby capping the opening of the GroEL channel. This Bifidobacterium longum (strain NCC 2705) protein is Co-chaperonin GroES.